A 265-amino-acid polypeptide reads, in one-letter code: Putative cysteine-rich receptor-like protein kinase 9 (265 aa).

An N-terminal signal peptide occupies residues 1 to 23 (MSSLISFIFLFLFSFLTSFKASA). Gnk2-homologous domains are found at residues 27 to 131 (FYLN…DKNI) and 142 to 244 (FILS…LYSF). N-linked (GlcNAc...) asparagine glycosylation is found at Asn-35, Asn-60, Asn-69, Asn-153, Asn-177, and Asn-246.

It belongs to the protein kinase superfamily. Ser/Thr protein kinase family. CRK subfamily.

The protein resides in the secreted. The protein is Putative cysteine-rich receptor-like protein kinase 9 (CRK9) of Arabidopsis thaliana (Mouse-ear cress).